The following is an 885-amino-acid chain: MFHHRGGCTPRAQTPYAANVPIVAEQQQFQQQIDQTANAMGNFQLNDNAYSFTQPAQQPQQPSSRKVANQLYPVDLFTELPPPIRDLSLPPPPITISQDSIVTPSETSNVPYQYVRSTLNAVPKTSSLLKKTKLPFGIVIRPYLNLQDSSEYVPLNNDGIIVRCRRCRSYLNPFVAFIEQGRRWQCNICRFKNDVPFGFDQNLQGAPINRYERNEIKHSVMEYLAPIEYSVREPPPSTYVFILDVSQNAVRNGLLATSARTILENLESLPNHDGRTSVSIICVDHALHYFYVPLDDDYEESDDDDDEDDDDEEEDNEEEEEEEEDEEDDDDSITEAIQMFDVGDLSEPFLPMPSEELVVPLRYCKKNLEKLLKTIPEVFQDTHISKFALGPALKAASYLISNTGGKIEVISSTLPDTGVGKLKRRAEQGVLNTTKESSQLLSCQDSFYKTFTIECSKMQITVDMFLASEEYMDVATLSHLSRFSGGQTHFYPGFNATSLNDVTKFTRELSKHLSMDISMEAVMRVRGSTGLRATSFFGHFFNRSSDLCAFSTMPRDQSYLFEISIEDSLVAEHCYLQVSTLLTLNTGERRIRVMTLALPTTESGREVYASADQLAITDFITQNAVAKALNSSMDSARDLITKSLQDILSAYKKEISMSNITAVTSLNLCANLRMLPLLMNALGKHIAFRPGMVPSDYRASSLNKLETEPLHYLIKSIYPTVYSLHDIPDEVGLLDSNRETKLPDPINATASLFERYGLYLIDNSTELFLWVGGDAVPELLNDVFNTDNISNVPVGKSELPVLIDSPFNVRLRNIISKIRENNDTITFQSLYTIRGPSINEPANLTAEREMASLRLWVSSTLVEDKILNCASYREYLQSMKTAINR.

The Zn(2+) site is built by Cys-164, Cys-167, Cys-186, and Cys-189. The interval 164–189 (CRRCRSYLNPFVAFIEQGRRWQCNIC) is zinc finger-like. The disordered stretch occupies residues 296–332 (DDYEESDDDDDEDDDDEEEDNEEEEEEEEDEEDDDDS).

It belongs to the SEC23/SEC24 family. SEC24 subfamily. As to quaternary structure, the COPII coat is composed of at least 5 proteins: the SEC23/24 complex, the SEC13/31 complex, and the protein SAR1. Golgi apparatus membrane; Peripheral membrane protein; Cytoplasmic side.

The protein resides in the cytoplasm. The protein localises to the cytoplasmic vesicle. Its subcellular location is the COPII-coated vesicle membrane. It is found in the endoplasmic reticulum membrane. It localises to the golgi apparatus membrane. Component of the coat protein complex II (COPII) which promotes the formation of transport vesicles from the endoplasmic reticulum (ER). The coat has two main functions, the physical deformation of the endoplasmic reticulum membrane into vesicles and the selection of cargo molecules. This chain is Protein transport protein SEC24-1 (SEC241), found in Saccharomyces uvarum (strain ATCC 76518 / CBS 7001 / CLIB 283 / NBRC 10550 / MCYC 623 / NCYC 2669 / NRRL Y-11845) (Yeast).